Here is a 280-residue protein sequence, read N- to C-terminus: Small ribosomal subunit protein uS15m (280 aa).

This sequence belongs to the universal ribosomal protein uS15 family. As to quaternary structure, component of the mitochondrial ribosome small subunit (28S) which comprises a 12S rRNA and about 30 distinct proteins. Expressed in anterior and posterior midgut primordia in stage 11 embryos. In stage 13 embryos, expression is high in the developing midgut and hindgut. In stage 16 embryos, expression is elevated in the midgut, hindgut, and in a small region that will give rise to pharyngeal muscles and to the stomatogastric nervous system. In larvae, expression is predominant in the gut, and head, presumably in pharyngeal muscles.

Its subcellular location is the mitochondrion. In terms of biological role, essential for gut mitochondrial activity. Might be involved in tissue specific growth factor production. In Drosophila melanogaster (Fruit fly), this protein is Small ribosomal subunit protein uS15m (bonsai).